Consider the following 270-residue polypeptide: MLLGSVPQLDRVAIQLGPFPVYWYGIIIGTGVLLGLWLATREGERLGIPKDTFVDLVLIAVPIAILFARMYYVIFEWEYYAQNPSQIINIRQGGLAIHGGLIGAVITGILFAKRRGVSFWKLADIAAPSILLGQAIGRWGNFMNQEAHGDEVTRQFLEGLHLPDFIINQMYIDGVYYHPTFLYESLWNFAGVILLLALRKVNLRRGELFFTYLIWYSVGRFFVEGLRTDSLMLGPLRIAQVMSIGLVVISIIFIIVRRKMGQADKRYLEN.

A run of 4 helical transmembrane segments spans residues 19 to 39 (FPVYWYGIIIGTGVLLGLWLA), 56 to 76 (LVLIAVPIAILFARMYYVIFE), 92 to 112 (QGGLAIHGGLIGAVITGILFA), and 116 to 136 (GVSFWKLADIAAPSILLGQAI). Arginine 138 provides a ligand contact to a 1,2-diacyl-sn-glycero-3-phospho-(1'-sn-glycerol). A run of 3 helical transmembrane segments spans residues 178–198 (HPTFLYESLWNFAGVILLLAL), 206–226 (GELFFTYLIWYSVGRFFVEGL), and 236–256 (LRIAQVMSIGLVVISIIFIIV).

The protein belongs to the Lgt family.

The protein resides in the cell membrane. It carries out the reaction L-cysteinyl-[prolipoprotein] + a 1,2-diacyl-sn-glycero-3-phospho-(1'-sn-glycerol) = an S-1,2-diacyl-sn-glyceryl-L-cysteinyl-[prolipoprotein] + sn-glycerol 1-phosphate + H(+). It participates in protein modification; lipoprotein biosynthesis (diacylglyceryl transfer). In terms of biological role, catalyzes the transfer of the diacylglyceryl group from phosphatidylglycerol to the sulfhydryl group of the N-terminal cysteine of a prolipoprotein, the first step in the formation of mature lipoproteins. This is Phosphatidylglycerol--prolipoprotein diacylglyceryl transferase from Bacillus cereus (strain Q1).